A 577-amino-acid polypeptide reads, in one-letter code: Vacuolar membrane amino acid uptake transporter fnx2 (577 aa).

The segment covering 1–14 has biased composition (polar residues); the sequence is MSNPRTKSPNTNRG. Residues 1-80 are disordered; it reads MSNPRTKSPN…SPHRQDAATT (80 aa). Residues 22 to 39 show a composition bias toward low complexity; that stretch reads SALLNDSLSSLNGNSSYD. A compositionally biased stretch (basic and acidic residues) spans 40-62; that stretch reads SIKDSSKNNKDVAEVNEYPRRPE. 14 consecutive transmembrane segments (helical) span residues 91–111, 123–145, 157–177, 186–206, 217–237, 244–264, 286–306, 317–337, 356–376, 391–411, 418–438, 448–468, 490–510, and 547–567; these read VLPALLLGVVLAALDNTIVAS, FSQVSWTATAYMISCTAFQPLFG, LLAAYCVFGIGCFLCGTSRSL, IAGIGGGGMNSTVSILMSDIV, IINVFFAIGSSLGGPVGGYFA, IGFLIQVPLIAIAFLCVYFTL, LILLIIGVTTMTCAFTLGGNV, LLIASSISYLSFVYVEAFVAF, LCNFFHSVANFGWIYGMPLFF, LIPMIIGSSLGSLLGGAVISL, ITVGSYFFGSVAALFMLRYGY, YPFSGGLGNGIAVTTTLVAII, GCVLGVSISSSIVQTVLGIKL, and LLGSIHYSFLFVSFMFFCAFV.

Belongs to the major facilitator superfamily.

The protein localises to the vacuole. It is found in the membrane. MFS-type transporter involved in vacuolar amino acid uptake. The polypeptide is Vacuolar membrane amino acid uptake transporter fnx2 (fnx2) (Schizosaccharomyces pombe (strain 972 / ATCC 24843) (Fission yeast)).